We begin with the raw amino-acid sequence, 179 residues long: Endoribonuclease YbeY (179 aa).

Zn(2+) is bound by residues His148, His152, and His158.

Belongs to the endoribonuclease YbeY family. It depends on Zn(2+) as a cofactor.

It localises to the cytoplasm. In terms of biological role, single strand-specific metallo-endoribonuclease involved in late-stage 70S ribosome quality control and in maturation of the 3' terminus of the 16S rRNA. The chain is Endoribonuclease YbeY from Prochlorococcus marinus (strain MIT 9215).